A 1518-amino-acid chain; its full sequence is Probable serine/threonine-protein kinase HSL1 (1518 aa).

Disordered regions lie at residues 1 to 43 and 55 to 83; these read MTGH…GHLE and RLSQ…PWKL. The segment covering 55–68 has biased composition (polar residues); it reads RLSQPDSTVSVATK. A Protein kinase domain is found at 81 to 369; sequence WKLGKTLGKG…TQEILKHPLI (289 aa). Residues 87–95 and K110 contribute to the ATP site; that span reads LGKGSSGRV. D239 serves as the catalytic Proton acceptor. The interval 467–502 is disordered; it reads LSSSSENKKSATESSVNEPRIEYASKTANNTGLRSE. Positions 492–501 are enriched in polar residues; sequence KTANNTGLRS. At S511 the chain carries Phosphoserine. Over residues 599–611 the composition is skewed to low complexity; it reads SNSRLSLSASTSR. The disordered stretch occupies residues 599 to 651; the sequence is SNSRLSLSASTSRETVHDNEMPLPQLPKSPSRYSLSRRAIHASPSTKSIHKSL. Residues S629 and S685 each carry the phosphoserine modification. Positions 741-783 are disordered; that stretch reads EEEDNEKERDTQRQRQNDTKSSADTFTISGVSTNKENEGPEYP. Residues 746 to 758 are compositionally biased toward basic and acidic residues; the sequence is EKERDTQRQRQND. The segment covering 759–774 has biased composition (polar residues); that stretch reads TKSSADTFTISGVSTN. Phosphoserine occurs at positions 837 and 866. Residues 856–876 show a composition bias toward basic and acidic residues; it reads EQLQKKNDRPSPLKPIQHQEL. 4 disordered regions span residues 856-898, 1005-1030, 1150-1170, and 1220-1243; these read EQLQ…RRNI, DDKH…KQSA, APSD…RASV, and SPEN…RDSN. Phosphoserine is present on S1220. The span at 1222–1243 shows a compositional bias: polar residues; it reads ENPSNTHMQKRFSSTRGSRDSN. At S1250 the chain carries Phosphoserine. The tract at residues 1259–1291 is disordered; that stretch reads EEDQDGHTSQADILESSMSYSKRRPSEESVNPK. Polar residues predominate over residues 1265–1278; that stretch reads HTSQADILESSMSY. Phosphoserine is present on residues S1284, S1287, and S1325.

It belongs to the protein kinase superfamily. CAMK Ser/Thr protein kinase family. NIM1 subfamily.

The protein localises to the bud neck. It catalyses the reaction L-seryl-[protein] + ATP = O-phospho-L-seryl-[protein] + ADP + H(+). The enzyme catalyses L-threonyl-[protein] + ATP = O-phospho-L-threonyl-[protein] + ADP + H(+). The chain is Probable serine/threonine-protein kinase HSL1 (HSL1) from Saccharomyces cerevisiae (strain ATCC 204508 / S288c) (Baker's yeast).